Consider the following 236-residue polypeptide: MTHPVAVKACLFDMDGLLINTEDIYTETLNETLAEFGKGPLTWDVKIKLQGLPGPEAGKRVIEHYKLPITLDEYDERNVALQSLKWGTCEFLPGALNLLKYLKLKNIPIALCTSSNKTKFRGKTSHLEEGFDLFDTIVTGDDPRIAKGRGKPFPDIWQLGLKELNEKFHTDIKPDECIVFEDGIPGVKSAKAFGAHVIWVPHPEAHAVLGDTEALLAGKGELLSSLEKLEMSKYGL.

It belongs to the HAD-like hydrolase superfamily.

It catalyses the reaction XMP + H2O = xanthosine + phosphate. The enzyme catalyses psi-UMP + H2O = pseudouridine + phosphate. In terms of biological role, nucleotidase with XMP as the best in vitro substrate. Low catalytic efficiencies of YKL033W-A observed with XMP and other substrates suggest that these could be secondary activities for this protein, and its primary substrate is not yet identified. May possess pseudouridine 5'-phosphatase activity and together with dTTP/UTP pyrophosphatase YOR111W might constitute a pathway for the detoxification of pseudouridine 5'-triphosphate (Psi-UTP) and -monophosphate (Psi-UMP). In Saccharomyces cerevisiae (strain ATCC 204508 / S288c) (Baker's yeast), this protein is Probable pseudouridine-5'-phosphatase YKL033W-A.